Consider the following 322-residue polypeptide: tRNA uridine(34) hydroxylase (322 aa).

A Rhodanese domain is found at 126-220 (LAEDTVVIDA…YGKDPEVKGE (95 aa)). Cysteine 180 functions as the Cysteine persulfide intermediate in the catalytic mechanism.

Belongs to the TrhO family.

The catalysed reaction is uridine(34) in tRNA + AH2 + O2 = 5-hydroxyuridine(34) in tRNA + A + H2O. In terms of biological role, catalyzes oxygen-dependent 5-hydroxyuridine (ho5U) modification at position 34 in tRNAs. In Shouchella clausii (strain KSM-K16) (Alkalihalobacillus clausii), this protein is tRNA uridine(34) hydroxylase.